A 107-amino-acid polypeptide reads, in one-letter code: Large ribosomal subunit protein P2 (107 aa).

The span at Ser-63–Pro-83 shows a compositional bias: low complexity. The interval Ser-63–Asp-107 is disordered. Basic and acidic residues predominate over residues Lys-84 to Pro-93.

It belongs to the eukaryotic ribosomal protein P1/P2 family. In terms of assembly, P1 and P2 exist as dimers at the large ribosomal subunit. Post-translationally, phosphorylated.

Its function is as follows. Plays an important role in the elongation step of protein synthesis. This is Large ribosomal subunit protein P2 from Caenorhabditis elegans.